The chain runs to 425 residues: Glutamyl-tRNA reductase (425 aa).

Residues 49–52 (TCNR), Ser-107, 112–114 (EPQ), and Gln-118 each bind substrate. Residue Cys-50 is the Nucleophile of the active site. 187-192 (GAGETI) serves as a coordination point for NADP(+).

The protein belongs to the glutamyl-tRNA reductase family. Homodimer.

The enzyme catalyses (S)-4-amino-5-oxopentanoate + tRNA(Glu) + NADP(+) = L-glutamyl-tRNA(Glu) + NADPH + H(+). Its pathway is porphyrin-containing compound metabolism; protoporphyrin-IX biosynthesis; 5-aminolevulinate from L-glutamyl-tRNA(Glu): step 1/2. Functionally, catalyzes the NADPH-dependent reduction of glutamyl-tRNA(Glu) to glutamate 1-semialdehyde (GSA). The polypeptide is Glutamyl-tRNA reductase (Pseudomonas syringae pv. tomato (strain ATCC BAA-871 / DC3000)).